A 245-amino-acid chain; its full sequence is Dehydrogenase/reductase SDR family member 6 (245 aa).

Residues 16–18, aspartate 37, and aspartate 58 each bind NAD(+); that span reads QGI. Arginine 144 contributes to the substrate binding site. Catalysis depends on tyrosine 147, which acts as the Proton acceptor. NAD(+) is bound by residues lysine 151 and 180-184; that span reads VDTPS. The substrate site is built by arginine 188 and arginine 205.

This sequence belongs to the short-chain dehydrogenases/reductases (SDR) family. As to quaternary structure, homotetramer.

It is found in the cytoplasm. The enzyme catalyses cis-4-hydroxy-L-proline + NAD(+) = 4-oxo-L-proline + NADH + H(+). The catalysed reaction is (R)-3-hydroxybutanoate + NAD(+) = acetoacetate + NADH + H(+). It functions in the pathway amino-acid metabolism. The protein operates within siderophore biosynthesis. Its function is as follows. NAD(H)-dependent dehydrogenase/reductase with a preference for cyclic substrates. Catalyzes stereoselective conversion of 4-oxo-L-proline to cis-4-hydroxy-L-proline, likely a detoxification mechanism for ketoprolines. Mediates the formation of 2,5-dihydroxybenzoate (2,5-DHBA), a siderophore that chelates free cytoplasmic iron and associates with LCN2, thereby regulating iron transport and homeostasis while protecting cells against free radical-induced oxidative stress. The iron-siderophore complex is imported into mitochondria, providing an iron source for mitochondrial metabolic processes in particular heme synthesis. May act as a 3-hydroxybutyrate dehydrogenase. The chain is Dehydrogenase/reductase SDR family member 6 from Rattus norvegicus (Rat).